The chain runs to 256 residues: 5'-nucleotidase YutF (256 aa).

This sequence belongs to the HAD-like hydrolase superfamily. NagD family. Homodimer. Mg(2+) serves as cofactor.

It localises to the cytoplasm. It catalyses the reaction a ribonucleoside 5'-phosphate + H2O = a ribonucleoside + phosphate. The enzyme catalyses XMP + H2O = xanthosine + phosphate. Catalyzes the hydrolysis of various purine and pyrimidine 5'-nucleotides, showing preference for 5'-nucleoside monophosphates and exhibiting the highest catalytic activity toward 5'-XMP. Also shows a relatively high phosphohydrolase activity toward the nucleotide precursors ribose-5-phosphate (R5P) and 5-phosphoribosyl-1-pyrophosphate (PRPP), and toward the non-natural substrate p-nitrophenyl phosphate (pNPP). This is 5'-nucleotidase YutF (yutF) from Bacillus subtilis (strain 168).